Consider the following 328-residue polypeptide: Trans-O-hydroxybenzylidenepyruvate hydratase-aldolase (328 aa).

It belongs to the DapA family. In terms of assembly, homotrimer.

The enzyme catalyses (3E)-4-(2-hydroxyphenyl)-2-oxobut-3-enoate + H2O = salicylaldehyde + pyruvate. Its pathway is aromatic compound metabolism; naphthalene degradation. Inhibited bye p-chloromercuribenzoate and salicylaldehyde. Activated by salicylate. Its function is as follows. Involved in the naphthalene and naphthalenesulfonate catabolic pathway. Catalyzes the transformation of trans-O-hydroxybenzylidenepyruvate (THBPA) to salicylaldehyde and pyruvate. The reaction is reversible. Can also use 2,4-dihydroxybenzalpyruvate (2,4-DHBP) and 2,6-dihydroxybenzalpyruvate (2,6-DHBP). This is Trans-O-hydroxybenzylidenepyruvate hydratase-aldolase (nsaE) from Sphingobium xenophagum.